Consider the following 445-residue polypeptide: Chromosome partition protein MukF (445 aa).

Residues 213-241 form a leucine-zipper region; that stretch reads LSETSATLRELQDTLQAAGDELQTQILDI.

The protein belongs to the MukF family. Interacts, and probably forms a ternary complex, with MukE and MukB via its C-terminal region. The complex formation is stimulated by calcium or magnesium. It is required for an interaction between MukE and MukB.

It is found in the cytoplasm. The protein resides in the nucleoid. Involved in chromosome condensation, segregation and cell cycle progression. May participate in facilitating chromosome segregation by condensation DNA from both sides of a centrally located replisome during cell division. Not required for mini-F plasmid partitioning. Probably acts via its interaction with MukB and MukE. Overexpression results in anucleate cells. It has a calcium binding activity. This chain is Chromosome partition protein MukF, found in Vibrio cholerae serotype O1 (strain ATCC 39315 / El Tor Inaba N16961).